An 863-amino-acid polypeptide reads, in one-letter code: Paramyosin (863 aa).

A nonhelical region region spans residues Met-1 to Pro-18. A coiled-coil region spans residues Ser-19–Ile-836. The nonhelical region stretch occupies residues Gly-837–Met-863.

The protein belongs to the paramyosin family. As to quaternary structure, homodimer or monomer in secreted form.

It localises to the cytoplasm. It is found in the myofibril. The protein resides in the secreted. In terms of biological role, paramyosin is a major structural component of many thick filaments isolated from invertebrate muscles. It is a prominent antigen in human cysticercosis, may have a role as a modulator of the host immune response. It is able to bind collagen and has complement inhibitor activity. This Taenia solium (Pork tapeworm) protein is Paramyosin (PMY).